Reading from the N-terminus, the 1377-residue chain is MAQTHSFNGRKRVRKFFGKIPEVAEMPNLIEVQKASYDQFLMVEEPSGGRPDEGLQAVFKSVFPIQDFSGASMLEFVRYEFDPPKFDVDECRQRDLTYSAPLKVTLRLIVFDIDEDTGAKSIKDIKEQDVYMGDMPLMTDNGTFIVNGTERVIVSQMHRSPGVFFDHDKGKTHSSGKLLFAARVIPYRGSWLDIEFDSKDIVYARIDRRRKLPATTLLMALGMDGEEILSTFYKTVTYTRDGDNWRIPYSAERFKGMKIISDLVDADTGEAVLEAGKKLTARAAKQLAEKGLKAIKATEDDLFGSYLAEDVVNYATGEIYLEAGDEIDEKVLKTLIDTGETEINVLDIDHVNIGAYIRNTLAVDKNESRQEALFDIYRVMRPGEPPTMDSAEAMFHSLFFDSERYDLSAVGRVKMNMRLDLDAEDTVRVLRKEDILAVVKMLVELRDGRGEIDDIDNLGNRRVRSVGELMENQYRVGLLRMERAIKERMSSIEIDTVMPQDLINAKPAAAAVREFFGSSQLSQFMDQTNPLSEITHKRRLSALGPGGLTRERAGFEVRDVHPTHYGRICPIETPEGPNIGLINSLATFARVNKYGFIESPYRKVVDGKVTNDVVYLSAMEEAKHSVAQANVELDEQGGFVDEFVICRHAGEVMMAPRENVDLMDVSPKQLVSVAAALIPFLENDDANRALMGSNMQRQAVPLVRAEAPFVGTGMEPIVARDSGAAIAARRGGIVDQVDATRIVIRATEELDPSKSGVDIYRLQKFQRSNQSTCINQRPLVRVGDRIHKGDIIADGPSTDLGDLALGRNVLVAFMPWNGYNYEDSILLSEKIVSDDVFTSIHIEEFEVAARDTKLGPEEITRDIPNVSEEALKNLDEAGIVYIGAEVHPGDILVGKITPKGESPMTPEEKLLRAIFGEKASDVRDTSMRMPPGTYGTVVEVRVFNRHGVEKDERAMAIEREEIERLAKDRDDEQAILDRNVYGRLADMIDGKVAAAGPKGFKKGTTITRELMTEYPRSQWWQFAVEDEKLQGELEALRSQYDDSKKLLEARFMDKVEKVQRGDEMPPGVMKMVKVFVAVKRKIQPGDKMAGRHGNKGVVSRILPVEDMPFLEDGTHADIVLNPLGVPSRMNVGQILETHLGWACAGMGKKIGELLDVYRKTANIEPLRQTLEHIYPDNDRNEPVRSYDDDAILMLANQVKRGVSIATPVFDGAVEADINAMLTDAGLATSGQSTLYDGRTGEPFDRQVTMGYIYMLKLHHLVDDKIHARSIGPYSLVTQQPLGGKAQFGGQRFGEMEVWALEAYGAAYTLQEMLTVKSDDVAGRTKVYEAIVRGDDTFEAGIPESFNVLVKEMRSLGLNVELDDTREAEQPALPDAAE.

This sequence belongs to the RNA polymerase beta chain family. As to quaternary structure, the RNAP catalytic core consists of 2 alpha, 1 beta, 1 beta' and 1 omega subunit. When a sigma factor is associated with the core the holoenzyme is formed, which can initiate transcription.

It catalyses the reaction RNA(n) + a ribonucleoside 5'-triphosphate = RNA(n+1) + diphosphate. Functionally, DNA-dependent RNA polymerase catalyzes the transcription of DNA into RNA using the four ribonucleoside triphosphates as substrates. This is DNA-directed RNA polymerase subunit beta from Brucella suis biovar 1 (strain 1330).